Reading from the N-terminus, the 429-residue chain is Inositol-3-phosphate synthase 1 (429 aa).

A helical transmembrane segment spans residues 12 to 32; that stretch reads LGVLVVGVGGAVATTMIVGTL. NAD(+) contacts are provided by Ala22, Val23, Asp79, Ala116, Ala165, Thr167, Tyr201, Ser244, Arg276, Asp277, and Lys290.

This sequence belongs to the myo-inositol 1-phosphate synthase family. Homotetramer. The cofactor is NAD(+).

Its subcellular location is the membrane. It catalyses the reaction D-glucose 6-phosphate = 1D-myo-inositol 3-phosphate. The protein operates within polyol metabolism; myo-inositol biosynthesis; myo-inositol from D-glucose 6-phosphate: step 1/2. Key enzyme in myo-inositol biosynthesis pathway that catalyzes the conversion of glucose 6-phosphate to 1D-myo-inositol 3-phosphate in a NAD-dependent manner. This Bacteroides thetaiotaomicron (strain ATCC 29148 / DSM 2079 / JCM 5827 / CCUG 10774 / NCTC 10582 / VPI-5482 / E50) protein is Inositol-3-phosphate synthase 1.